We begin with the raw amino-acid sequence, 321 residues long: Beta-ketoacyl-[acyl-carrier-protein] synthase III (321 aa).

Catalysis depends on residues Cys-113 and His-246. An ACP-binding region spans residues 247–251 (QANVR). Asn-276 is an active-site residue.

Belongs to the thiolase-like superfamily. FabH family. As to quaternary structure, homodimer.

It localises to the cytoplasm. It carries out the reaction malonyl-[ACP] + acetyl-CoA + H(+) = 3-oxobutanoyl-[ACP] + CO2 + CoA. It participates in lipid metabolism; fatty acid biosynthesis. Functionally, catalyzes the condensation reaction of fatty acid synthesis by the addition to an acyl acceptor of two carbons from malonyl-ACP. Catalyzes the first condensation reaction which initiates fatty acid synthesis and may therefore play a role in governing the total rate of fatty acid production. Possesses both acetoacetyl-ACP synthase and acetyl transacylase activities. Its substrate specificity determines the biosynthesis of branched-chain and/or straight-chain of fatty acids. This Enterococcus faecalis (strain ATCC 700802 / V583) protein is Beta-ketoacyl-[acyl-carrier-protein] synthase III.